We begin with the raw amino-acid sequence, 219 residues long: Proteasome subunit beta 2 (219 aa).

Positions 1–25 (MAEWIAGGLEGPAGRGLDERVVRSG) are cleaved as a propeptide — removed in mature form; by autocatalysis. The active-site Nucleophile is the Thr26.

This sequence belongs to the peptidase T1B family. In terms of assembly, the 20S proteasome core is composed of 14 alpha and 14 beta subunits that assemble into four stacked heptameric rings, resulting in a barrel-shaped structure. The two inner rings, each composed of seven catalytic beta subunits, are sandwiched by two outer rings, each composed of seven alpha subunits. The catalytic chamber with the active sites is on the inside of the barrel. Has a gated structure, the ends of the cylinder being occluded by the N-termini of the alpha-subunits. Is capped at one or both ends by the proteasome regulatory ATPase, PAN.

The protein resides in the cytoplasm. It catalyses the reaction Cleavage of peptide bonds with very broad specificity.. With respect to regulation, the formation of the proteasomal ATPase PAN-20S proteasome complex, via the docking of the C-termini of PAN into the intersubunit pockets in the alpha-rings, triggers opening of the gate for substrate entry. Interconversion between the open-gate and close-gate conformations leads to a dynamic regulation of the 20S proteasome proteolysis activity. Component of the proteasome core, a large protease complex with broad specificity involved in protein degradation. In Aeropyrum pernix (strain ATCC 700893 / DSM 11879 / JCM 9820 / NBRC 100138 / K1), this protein is Proteasome subunit beta 2.